The following is a 140-amino-acid chain: MAIERTLSIIKPDATRRNLTGAINARFEEAGLRIVGQKRLRLTTAQAEGFYEVHKERSFFGSLVEFMTSGPVVVQVLEGENAVLKNREVMGATNPANAAEHTIRKDFAESIEANSVHGSDSAENAAHEIAYFFAQTEIVA.

Positions 11, 59, 87, 93, 104, and 114 each coordinate ATP. His117 functions as the Pros-phosphohistidine intermediate in the catalytic mechanism.

It belongs to the NDK family. As to quaternary structure, homotetramer. The cofactor is Mg(2+).

It is found in the cytoplasm. The catalysed reaction is a 2'-deoxyribonucleoside 5'-diphosphate + ATP = a 2'-deoxyribonucleoside 5'-triphosphate + ADP. The enzyme catalyses a ribonucleoside 5'-diphosphate + ATP = a ribonucleoside 5'-triphosphate + ADP. In terms of biological role, major role in the synthesis of nucleoside triphosphates other than ATP. The ATP gamma phosphate is transferred to the NDP beta phosphate via a ping-pong mechanism, using a phosphorylated active-site intermediate. This is Nucleoside diphosphate kinase from Rhodospirillum rubrum (strain ATCC 11170 / ATH 1.1.1 / DSM 467 / LMG 4362 / NCIMB 8255 / S1).